A 260-amino-acid polypeptide reads, in one-letter code: Ras-related protein Rab-26 (260 aa).

Residues 1–56 (MSRKKTPKSKGGSEPATSTLPAAAAATNGPRLAHPRTVRPGPEAPPNGPPQSIRPS) form a disordered region. GTP is bound by residues S76, G77, V78, G79, K80, T81, C82, S99, and T100. T81 serves as a coordination point for Mg(2+). Short sequence motifs (switch) lie at residues 90-105 (GAFLAGTFISTVGIDF) and 123-140 (DTAGQERFRSVTHAYYRD). Residues T100 and D123 each contribute to the Mg(2+) site. Residues G126, N181, K182, D184, A212, and R213 each contribute to the GTP site. Residues C257 and C258 are each lipidated (S-geranylgeranyl cysteine).

Belongs to the small GTPase superfamily. Rab family. As to quaternary structure, interacts with ADRA2B. Interacts with RIMS1. The cofactor is Mg(2+). As to expression, detected in zymogenic cells in the stomach.

It is found in the cytoplasmic vesicle. It localises to the secretory vesicle membrane. The protein resides in the golgi apparatus membrane. It carries out the reaction GTP + H2O = GDP + phosphate + H(+). Its activity is regulated as follows. Regulated by guanine nucleotide exchange factors (GEFs) which promote the exchange of bound GDP for free GTP. Regulated by GTPase activating proteins (GAPs) which increase the GTP hydrolysis activity. Inhibited by GDP dissociation inhibitors (GDIs). Functionally, the small GTPases Rab are key regulators of intracellular membrane trafficking, from the formation of transport vesicles to their fusion with membranes. Rabs cycle between an inactive GDP-bound form and an active GTP-bound form that is able to recruit to membranes different set of downstream effectors directly responsible for vesicle formation, movement, tethering and fusion. RAB26 mediates transport of ADRA2A and ADRA2B from the Golgi to the cell membrane. Plays a role in the maturation of zymogenic granules and in pepsinogen secretion in the stomach. Plays a role in the secretion of amylase from acinar granules in the parotid gland. This Mus musculus (Mouse) protein is Ras-related protein Rab-26.